A 92-amino-acid polypeptide reads, in one-letter code: Putative transition state regulator Abh (92 aa).

Residues 5-50 form the SpoVT-AbrB domain; sequence GVVRKVDELGRIVMPIELRRALDIAIKDSIEFFVDGDKIILKKYKP.

This sequence to B.subtilis AbrB and SpoVT.

In Bacillus subtilis (strain 168), this protein is Putative transition state regulator Abh (abh).